A 63-amino-acid chain; its full sequence is Hyphancin-3G (63 aa).

The N-terminal stretch at 1 to 22 is a signal peptide; that stretch reads MNFSRILFFMFACFVALASVSA. Positions 23–26 are cleaved as a propeptide — removed by a dipeptidylpeptidase; it reads VPEP. Residue Leu-61 is modified to Leucine amide.

The protein belongs to the cecropin family.

It is found in the secreted. Functionally, has antibacterial activity. The protein is Hyphancin-3G of Hyphantria cunea (Fall webworm moth).